Consider the following 96-residue polypeptide: UPF0251 protein Ssed_3913 (96 aa).

Belongs to the UPF0251 family.

The chain is UPF0251 protein Ssed_3913 from Shewanella sediminis (strain HAW-EB3).